The sequence spans 96 residues: Co-chaperonin GroES (96 aa).

Belongs to the GroES chaperonin family. As to quaternary structure, heptamer of 7 subunits arranged in a ring. Interacts with the chaperonin GroEL.

The protein resides in the cytoplasm. Functionally, together with the chaperonin GroEL, plays an essential role in assisting protein folding. The GroEL-GroES system forms a nano-cage that allows encapsulation of the non-native substrate proteins and provides a physical environment optimized to promote and accelerate protein folding. GroES binds to the apical surface of the GroEL ring, thereby capping the opening of the GroEL channel. This Verminephrobacter eiseniae (strain EF01-2) protein is Co-chaperonin GroES.